Reading from the N-terminus, the 180-residue chain is NAD(P)H-quinone oxidoreductase subunit I, chloroplastic (180 aa).

2 4Fe-4S ferredoxin-type domains span residues 55-84 (GRIHFEFDKCIACEVCVRVCPIDLPLVDWK) and 95-124 (LNYSIDFGVCIFCGNCVEYCPTNCLSMTEE). Residues cysteine 64, cysteine 67, cysteine 70, cysteine 74, cysteine 104, cysteine 107, cysteine 110, and cysteine 114 each coordinate [4Fe-4S] cluster.

It belongs to the complex I 23 kDa subunit family. In terms of assembly, NDH is composed of at least 16 different subunits, 5 of which are encoded in the nucleus. [4Fe-4S] cluster is required as a cofactor.

Its subcellular location is the plastid. The protein localises to the chloroplast thylakoid membrane. It catalyses the reaction a plastoquinone + NADH + (n+1) H(+)(in) = a plastoquinol + NAD(+) + n H(+)(out). The enzyme catalyses a plastoquinone + NADPH + (n+1) H(+)(in) = a plastoquinol + NADP(+) + n H(+)(out). Functionally, NDH shuttles electrons from NAD(P)H:plastoquinone, via FMN and iron-sulfur (Fe-S) centers, to quinones in the photosynthetic chain and possibly in a chloroplast respiratory chain. The immediate electron acceptor for the enzyme in this species is believed to be plastoquinone. Couples the redox reaction to proton translocation, and thus conserves the redox energy in a proton gradient. This is NAD(P)H-quinone oxidoreductase subunit I, chloroplastic from Sorghum bicolor (Sorghum).